The sequence spans 361 residues: Peptide chain release factor 1 (361 aa).

Residue glutamine 236 is modified to N5-methylglutamine.

It belongs to the prokaryotic/mitochondrial release factor family. Post-translationally, methylated by PrmC. Methylation increases the termination efficiency of RF1.

It is found in the cytoplasm. Functionally, peptide chain release factor 1 directs the termination of translation in response to the peptide chain termination codons UAG and UAA. The polypeptide is Peptide chain release factor 1 (Lactobacillus delbrueckii subsp. bulgaricus (strain ATCC BAA-365 / Lb-18)).